Here is a 290-residue protein sequence, read N- to C-terminus: ATP synthase subunit a (290 aa).

Helical transmembrane passes span 44-64 (AFHVDTLGWSVALGVIFILLF), 104-124 (VIAPLALTIFVWVFLMNAIDL), 161-181 (LSVFALIIFYSIKVKGIGGFI), 194-214 (ILVQALLIPVNFLLEFVTLVA), 233-253 (VFILIAVMFGSGLLWLSGMGV), and 260-280 (AVFHILIITLQAFIFMMLTIV).

It belongs to the ATPase A chain family. In terms of assembly, F-type ATPases have 2 components, CF(1) - the catalytic core - and CF(0) - the membrane proton channel. CF(1) has five subunits: alpha(3), beta(3), gamma(1), delta(1), epsilon(1). CF(0) has three main subunits: a(1), b(2) and c(9-12). The alpha and beta chains form an alternating ring which encloses part of the gamma chain. CF(1) is attached to CF(0) by a central stalk formed by the gamma and epsilon chains, while a peripheral stalk is formed by the delta and b chains.

It is found in the cell inner membrane. In terms of biological role, key component of the proton channel; it plays a direct role in the translocation of protons across the membrane. The protein is ATP synthase subunit a of Pseudomonas fluorescens (strain ATCC BAA-477 / NRRL B-23932 / Pf-5).